A 455-amino-acid chain; its full sequence is Gamma-aminobutyric acid receptor subunit alpha-1 (455 aa).

A signal peptide spans 1 to 27 (MKRLLVLCDCLWAWSLLLNALTERSYG). At 28-253 (QTSSQDELKD…FHLKRKIGYF (226 aa)) the chain is on the extracellular side. Residue asparagine 38 is glycosylated (N-linked (GlcNAc...) asparagine). Arginine 94 is a 4-aminobutanoate binding site. The N-linked (GlcNAc...) asparagine glycan is linked to asparagine 138. Threonine 157 is a 4-aminobutanoate binding site. Cysteines 166 and 180 form a disulfide. Residues 254-274 (VIQTYLPCIMTVILSQVSFWL) form a helical membrane-spanning segment. The Cytoplasmic segment spans residues 275–279 (NRESV). Residues 280–301 (PARTVFGVTTVLTMTTLSISAR) form a helical membrane-spanning segment. Residues 302–311 (NSLPKVAYAT) are Extracellular-facing. A helical membrane pass occupies residues 312-333 (AMDWFIAVCYAFVFSALIEFAT). Residues 334-420 (VNYFTKRGYA…TFNSVSKIDR (87 aa)) lie on the Cytoplasmic side of the membrane. Residues 421-440 (LSRIAFPLLFGIFNLVYWAT) traverse the membrane as a helical segment. The Extracellular segment spans residues 441–455 (YLNREPQLKAPTPHQ).

This sequence belongs to the ligand-gated ion channel (TC 1.A.9) family. Gamma-aminobutyric acid receptor (TC 1.A.9.5) subfamily. GABRA1 sub-subfamily. As to quaternary structure, heteropentamer, formed by a combination of alpha (GABRA1-6), beta (GABRB1-3), gamma (GABRG1-3), delta (GABRD), epsilon (GABRE), rho (GABRR1-3), pi (GABRP) and theta (GABRQ) subunits, each subunit exhibiting distinct physiological and pharmacological properties. In terms of tissue distribution, brain.

Its subcellular location is the postsynaptic cell membrane. It is found in the cell membrane. It carries out the reaction chloride(in) = chloride(out). Its activity is regulated as follows. Allosterically activated by benzodiazepines, the neuroanesthetic alphaxalone and pentobarbital. Inhibited by the antagonist bicuculline. Potentiated by histamine. Its function is as follows. Alpha subunit of the heteropentameric ligand-gated chloride channel gated by gamma-aminobutyric acid (GABA), a major inhibitory neurotransmitter in the brain. GABA-gated chloride channels, also named GABA(A) receptors (GABAAR), consist of five subunits arranged around a central pore and contain GABA active binding site(s) located at the alpha and beta subunit interface(s). When activated by GABA, GABAARs selectively allow the flow of chloride anions across the cell membrane down their electrochemical gradient. Chloride influx into the postsynaptic neuron following GABAAR opening decreases the neuron ability to generate a new action potential, thereby reducing nerve transmission. The GABAARs can also initiate the formation of functional inhibitory GABAergic synapses. GABAARs function also as histamine receptor where histamine binds at the interface of two neighboring beta subunits and potentiates GABA response. The protein is Gamma-aminobutyric acid receptor subunit alpha-1 (GABRA1) of Gallus gallus (Chicken).